The chain runs to 710 residues: DNA ligase (710 aa).

The disordered stretch occupies residues 1 to 26 (MPEDAIGQQVPPEQEAAGAEPTSAAR). NAD(+) contacts are provided by residues 53 to 57 (DAEFD), 102 to 103 (SL), and glutamate 132. Lysine 134 serves as the catalytic N6-AMP-lysine intermediate. Arginine 155, glutamate 196, lysine 312, and lysine 336 together coordinate NAD(+). Positions 430, 433, 449, and 455 each coordinate Zn(2+). Residues 619 to 708 (EGPRPLEGMT…PDAAREVARV (90 aa)) enclose the BRCT domain.

Belongs to the NAD-dependent DNA ligase family. LigA subfamily. Mg(2+) serves as cofactor. Mn(2+) is required as a cofactor.

The catalysed reaction is NAD(+) + (deoxyribonucleotide)n-3'-hydroxyl + 5'-phospho-(deoxyribonucleotide)m = (deoxyribonucleotide)n+m + AMP + beta-nicotinamide D-nucleotide.. In terms of biological role, DNA ligase that catalyzes the formation of phosphodiester linkages between 5'-phosphoryl and 3'-hydroxyl groups in double-stranded DNA using NAD as a coenzyme and as the energy source for the reaction. It is essential for DNA replication and repair of damaged DNA. This Salinispora arenicola (strain CNS-205) protein is DNA ligase.